Reading from the N-terminus, the 368-residue chain is MAKQDFYKILGVEKSASLTEIKKAYRNLVNIYHPDKNTKKSAEEQKQAEAKFKEIQEAYEILSDETKRKQYDKFGHAAFDQQFGGGSSGFSGFDFGDIFSSFTSGFGFGGSQEQKYSRPLKGENFQAKIYISFIESILGKEISQKLTKYDQCDNCKGSGANSSSDITTCYNCQGRGMQTEVLNIPGFGRVQNKTTCSVCLGSGKNITKNCKKCRGKTIVETKEEVTIKIPAGIQDGMFIRVAGFGGPGHKGGPSGDLHLEINVRQHKHFTRSGNDIHVNMPVSIIDVINQNTVEVPSPTGLKKVRLYDYYKSGQIVNVLRAGAPDPKNPRIIGDLKVHLIFYIPEFSPRQKDDLNQVFAQINDKTKAK.

The region spanning 5–75 (DFYKILGVEK…TKRKQYDKFG (71 aa)) is the J domain. A CR-type zinc finger spans residues 139–222 (GKEISQKLTK…CRGKTIVETK (84 aa)). Zn(2+) is bound by residues C152, C155, C169, C172, C196, C199, C210, and C213. 4 CXXCXGXG motif repeats span residues 152-159 (CDNCKGSG), 169-176 (CYNCQGRG), 196-203 (CSVCLGSG), and 210-217 (CKKCRGKT).

It belongs to the DnaJ family. In terms of assembly, homodimer. Requires Zn(2+) as cofactor.

The protein resides in the cytoplasm. In terms of biological role, participates actively in the response to hyperosmotic and heat shock by preventing the aggregation of stress-denatured proteins and by disaggregating proteins, also in an autonomous, DnaK-independent fashion. Unfolded proteins bind initially to DnaJ; upon interaction with the DnaJ-bound protein, DnaK hydrolyzes its bound ATP, resulting in the formation of a stable complex. GrpE releases ADP from DnaK; ATP binding to DnaK triggers the release of the substrate protein, thus completing the reaction cycle. Several rounds of ATP-dependent interactions between DnaJ, DnaK and GrpE are required for fully efficient folding. Also involved, together with DnaK and GrpE, in the DNA replication of plasmids through activation of initiation proteins. In Mesomycoplasma hyopneumoniae (strain 232) (Mycoplasma hyopneumoniae), this protein is Chaperone protein DnaJ.